Consider the following 196-residue polypeptide: DnaA initiator-associating protein DiaA (196 aa).

One can recognise an SIS domain in the interval 34 to 196 (MVQSLLNGNK…DNTLFPHQDD (163 aa)).

The protein belongs to the SIS family. DiaA subfamily. Homotetramer; dimer of dimers.

Its function is as follows. Required for the timely initiation of chromosomal replication via direct interactions with the DnaA initiator protein. This chain is DnaA initiator-associating protein DiaA, found in Photorhabdus laumondii subsp. laumondii (strain DSM 15139 / CIP 105565 / TT01) (Photorhabdus luminescens subsp. laumondii).